The sequence spans 153 residues: Regulatory protein RecX (153 aa).

It belongs to the RecX family.

It is found in the cytoplasm. In terms of biological role, modulates RecA activity. The protein is Regulatory protein RecX of Vibrio vulnificus (strain CMCP6).